The primary structure comprises 83 residues: Small ribosomal subunit protein bS20 (83 aa).

The protein belongs to the bacterial ribosomal protein bS20 family.

In terms of biological role, binds directly to 16S ribosomal RNA. The sequence is that of Small ribosomal subunit protein bS20 from Leuconostoc mesenteroides subsp. mesenteroides (strain ATCC 8293 / DSM 20343 / BCRC 11652 / CCM 1803 / JCM 6124 / NCDO 523 / NBRC 100496 / NCIMB 8023 / NCTC 12954 / NRRL B-1118 / 37Y).